Consider the following 662-residue polypeptide: UvrABC system protein B (662 aa).

Residues 31 to 188 enclose the Helicase ATP-binding domain; it reads DNIEGGEKAQ…NDLVDIQFER (158 aa). Position 44–51 (44–51) interacts with ATP; it reads GATGTGKT. A Beta-hairpin motif is present at residues 97–120; sequence YYDYYQPEAYVPSSDTYIEKDSSV. A Helicase C-terminal domain is found at 435 to 601; it reads QIDDLLGEIN…TIKKEIRDLI (167 aa). The UVR domain occupies 626–661; that stretch reads KDMIKKLEGQMQEAAGLLDFELAAQIRDMILEIKAM.

Belongs to the UvrB family. As to quaternary structure, forms a heterotetramer with UvrA during the search for lesions. Interacts with UvrC in an incision complex.

The protein localises to the cytoplasm. Functionally, the UvrABC repair system catalyzes the recognition and processing of DNA lesions. A damage recognition complex composed of 2 UvrA and 2 UvrB subunits scans DNA for abnormalities. Upon binding of the UvrA(2)B(2) complex to a putative damaged site, the DNA wraps around one UvrB monomer. DNA wrap is dependent on ATP binding by UvrB and probably causes local melting of the DNA helix, facilitating insertion of UvrB beta-hairpin between the DNA strands. Then UvrB probes one DNA strand for the presence of a lesion. If a lesion is found the UvrA subunits dissociate and the UvrB-DNA preincision complex is formed. This complex is subsequently bound by UvrC and the second UvrB is released. If no lesion is found, the DNA wraps around the other UvrB subunit that will check the other stand for damage. This chain is UvrABC system protein B, found in Streptococcus gordonii (strain Challis / ATCC 35105 / BCRC 15272 / CH1 / DL1 / V288).